Consider the following 251-residue polypeptide: MAIHGDRDDELRLFQTGEHPCGYWSDRVARDLVLDPNDRRLGALYPLALSWGFRRSGDLVYRPHCAHCQACVAVRIPVARFAPDRSQRRCAARNADLEVRITAATARDDLFALYHRYLTHRHANGGMDDHGPHEFEQFLIGSWSHTRFMEMRLPGHDGQPSQLLGVAVTDVTEHGLSAVYTFFDPDHAARGLGTFAILQQIEWARREGLPHVYLGYWIRGHQKMDYKRRFHPLEAYDGRRWHDFDNDLDGR.

It belongs to the R-transferase family. Bpt subfamily.

It is found in the cytoplasm. The catalysed reaction is N-terminal L-glutamyl-[protein] + L-leucyl-tRNA(Leu) = N-terminal L-leucyl-L-glutamyl-[protein] + tRNA(Leu) + H(+). It catalyses the reaction N-terminal L-aspartyl-[protein] + L-leucyl-tRNA(Leu) = N-terminal L-leucyl-L-aspartyl-[protein] + tRNA(Leu) + H(+). Functions in the N-end rule pathway of protein degradation where it conjugates Leu from its aminoacyl-tRNA to the N-termini of proteins containing an N-terminal aspartate or glutamate. In Stenotrophomonas maltophilia (strain K279a), this protein is Aspartate/glutamate leucyltransferase.